A 465-amino-acid polypeptide reads, in one-letter code: ATP-dependent protease ATPase subunit HslU (465 aa).

ATP-binding positions include Val-18, 60–65, Asp-277, Glu-342, and Arg-414; that span reads GVGKTE.

The protein belongs to the ClpX chaperone family. HslU subfamily. As to quaternary structure, a double ring-shaped homohexamer of HslV is capped on each side by a ring-shaped HslU homohexamer. The assembly of the HslU/HslV complex is dependent on binding of ATP.

The protein localises to the cytoplasm. Its function is as follows. ATPase subunit of a proteasome-like degradation complex; this subunit has chaperone activity. The binding of ATP and its subsequent hydrolysis by HslU are essential for unfolding of protein substrates subsequently hydrolyzed by HslV. HslU recognizes the N-terminal part of its protein substrates and unfolds these before they are guided to HslV for hydrolysis. This chain is ATP-dependent protease ATPase subunit HslU, found in Caldicellulosiruptor saccharolyticus (strain ATCC 43494 / DSM 8903 / Tp8T 6331).